The chain runs to 437 residues: Phosphomethylpyrimidine synthase (437 aa).

Residues Asn-69, Met-98, Tyr-127, His-163, 185–187 (SRG), 226–229 (DACR), and Glu-265 contribute to the substrate site. His-269 is a Zn(2+) binding site. Tyr-292 provides a ligand contact to substrate. Residue His-333 coordinates Zn(2+). Cys-409, Cys-412, and Cys-416 together coordinate [4Fe-4S] cluster.

It belongs to the ThiC family. Requires [4Fe-4S] cluster as cofactor.

The enzyme catalyses 5-amino-1-(5-phospho-beta-D-ribosyl)imidazole + S-adenosyl-L-methionine = 4-amino-2-methyl-5-(phosphooxymethyl)pyrimidine + CO + 5'-deoxyadenosine + formate + L-methionine + 3 H(+). The protein operates within cofactor biosynthesis; thiamine diphosphate biosynthesis. In terms of biological role, catalyzes the synthesis of the hydroxymethylpyrimidine phosphate (HMP-P) moiety of thiamine from aminoimidazole ribotide (AIR) in a radical S-adenosyl-L-methionine (SAM)-dependent reaction. The chain is Phosphomethylpyrimidine synthase from Alkaliphilus metalliredigens (strain QYMF).